A 257-amino-acid chain; its full sequence is Ribosomal RNA small subunit methyltransferase J (257 aa).

S-adenosyl-L-methionine contacts are provided by residues 107–108, 123–124, and D177; these read RD and ER.

It belongs to the methyltransferase superfamily. RsmJ family.

The protein resides in the cytoplasm. It carries out the reaction guanosine(1516) in 16S rRNA + S-adenosyl-L-methionine = N(2)-methylguanosine(1516) in 16S rRNA + S-adenosyl-L-homocysteine + H(+). In terms of biological role, specifically methylates the guanosine in position 1516 of 16S rRNA. The sequence is that of Ribosomal RNA small subunit methyltransferase J from Haemophilus influenzae (strain PittEE).